Here is a 543-residue protein sequence, read N- to C-terminus: UBP9-binding protein bun62 (543 aa).

Ser43 is modified (phosphoserine). WD repeat units follow at residues 239–279 (LNSS…QPLH), 320–361 (FSKS…DVFH), 362–401 (SYFA…LVAR), 404–448 (GHKS…IHRP), and 513–542 (VDDS…TWQR).

As to quaternary structure, interacts with ubp9 and bun107.

It localises to the nucleus. The protein resides in the cytoplasm. It is found in the cell tip. In terms of biological role, required for the ubp9 recruitment to septa and cell tips but also for its enzymatic activity at these specific locations. This is UBP9-binding protein bun62 (bun62) from Schizosaccharomyces pombe (strain 972 / ATCC 24843) (Fission yeast).